A 139-amino-acid chain; its full sequence is Peptide methionine sulfoxide reductase B4 (139 aa).

The residue at position 2 (Ala2) is an N-acetylalanine. The region spanning 12-133 (EEEWRAVLSP…NSVSINFNPA (122 aa)) is the MsrB domain. Zn(2+) is bound by residues Cys51, Cys54, Cys97, and Cys100. An intrachain disulfide couples Cys69 to Cys122. The Nucleophile role is filled by Cys122.

The protein belongs to the MsrB Met sulfoxide reductase family. It depends on Zn(2+) as a cofactor.

It is found in the cytoplasm. The protein resides in the cytosol. The enzyme catalyses L-methionyl-[protein] + [thioredoxin]-disulfide + H2O = L-methionyl-(R)-S-oxide-[protein] + [thioredoxin]-dithiol. Catalyzes the reduction of methionine sulfoxide (MetSO) to methionine in proteins. Plays a protective role against oxidative stress by restoring activity to proteins that have been inactivated by methionine oxidation. MSRB family specifically reduces the MetSO R-enantiomer. The chain is Peptide methionine sulfoxide reductase B4 (MSRB4) from Arabidopsis thaliana (Mouse-ear cress).